A 445-amino-acid chain; its full sequence is MDIRQVTETIAMIEEQNFDIRTITMGISLLDCIDPNINRAAEKIYQKITTKAANLVAVGDEIAAELGIPIVNKRVSVTPISLIGAATDATDYVVLAKALDKAAKEIGVDFIGGFSALVQKGYQKGDEILINSIPRALAETDKVCSSVNIGSTKSGINMTAVADMGRIIKETANLSDMGVAKLVVFANAVEDNPFMAGAFHGVGEADVIINVGVSGPGVVKRALEKVRGQSFDVVAETVKKTAFKITRIGQLVGQMASERLGVEFGIVDLSLAPTPAVGDSVARVLEEMGLETVGTHGTTAALALLNDQVKKGGVMACNQVGGLSGAFIPVSEDEGMIAAVQNGSLNLEKLEAMTAICSVGLDMIAIPEDTPAETIAAMIADEAAIGVINMKTTAVRIIPKGKEGDMIEFGGLLGTAPVMRVNGASSVDFISRGGQIPAPIHSFKN.

It belongs to the UPF0210 family. In terms of assembly, homodimer.

In Streptococcus pneumoniae (strain Hungary19A-6), this protein is UPF0210 protein SPH_0352.